The chain runs to 562 residues: Dihydroxy-acid dehydratase (562 aa).

Residue D80 coordinates Mg(2+). Position 121 (C121) interacts with [2Fe-2S] cluster. Residues D122 and K123 each contribute to the Mg(2+) site. K123 bears the N6-carboxylysine mark. C194 contributes to the [2Fe-2S] cluster binding site. Residue E446 participates in Mg(2+) binding. The active-site Proton acceptor is S472.

Belongs to the IlvD/Edd family. In terms of assembly, homodimer. Requires [2Fe-2S] cluster as cofactor. It depends on Mg(2+) as a cofactor.

It carries out the reaction (2R)-2,3-dihydroxy-3-methylbutanoate = 3-methyl-2-oxobutanoate + H2O. The enzyme catalyses (2R,3R)-2,3-dihydroxy-3-methylpentanoate = (S)-3-methyl-2-oxopentanoate + H2O. It functions in the pathway amino-acid biosynthesis; L-isoleucine biosynthesis; L-isoleucine from 2-oxobutanoate: step 3/4. It participates in amino-acid biosynthesis; L-valine biosynthesis; L-valine from pyruvate: step 3/4. In terms of biological role, functions in the biosynthesis of branched-chain amino acids. Catalyzes the dehydration of (2R,3R)-2,3-dihydroxy-3-methylpentanoate (2,3-dihydroxy-3-methylvalerate) into 2-oxo-3-methylpentanoate (2-oxo-3-methylvalerate) and of (2R)-2,3-dihydroxy-3-methylbutanoate (2,3-dihydroxyisovalerate) into 2-oxo-3-methylbutanoate (2-oxoisovalerate), the penultimate precursor to L-isoleucine and L-valine, respectively. The polypeptide is Dihydroxy-acid dehydratase (Staphylococcus aureus (strain MRSA252)).